A 289-amino-acid chain; its full sequence is F-box protein PP2-A11 (289 aa).

Residues 23–69 (QPGLGDLPESCVALILQNLDPVEICRFSKLNTAFHGASWADFVWESK) form the F-box domain.

In terms of assembly, part of a SCF (ASK-cullin-F-box) protein ligase complex. Interacts with SKP1A/ASK1.

It is found in the nucleus. It functions in the pathway protein modification; protein ubiquitination. Functionally, component of SCF(ASK-cullin-F-box) E3 ubiquitin ligase complexes, which may mediate the ubiquitination and subsequent proteasomal degradation of target proteins. In Arabidopsis thaliana (Mouse-ear cress), this protein is F-box protein PP2-A11 (PP2A11).